We begin with the raw amino-acid sequence, 223 residues long: Phosphoribosylformylglycinamidine synthase subunit PurQ (223 aa).

One can recognise a Glutamine amidotransferase type-1 domain in the interval phenylalanine 4–serine 223. Residue cysteine 85 is the Nucleophile of the active site. Active-site residues include histidine 196 and glutamate 198.

In terms of assembly, part of the FGAM synthase complex composed of 1 PurL, 1 PurQ and 2 PurS subunits.

The protein resides in the cytoplasm. It catalyses the reaction N(2)-formyl-N(1)-(5-phospho-beta-D-ribosyl)glycinamide + L-glutamine + ATP + H2O = 2-formamido-N(1)-(5-O-phospho-beta-D-ribosyl)acetamidine + L-glutamate + ADP + phosphate + H(+). The enzyme catalyses L-glutamine + H2O = L-glutamate + NH4(+). It participates in purine metabolism; IMP biosynthesis via de novo pathway; 5-amino-1-(5-phospho-D-ribosyl)imidazole from N(2)-formyl-N(1)-(5-phospho-D-ribosyl)glycinamide: step 1/2. Its function is as follows. Part of the phosphoribosylformylglycinamidine synthase complex involved in the purines biosynthetic pathway. Catalyzes the ATP-dependent conversion of formylglycinamide ribonucleotide (FGAR) and glutamine to yield formylglycinamidine ribonucleotide (FGAM) and glutamate. The FGAM synthase complex is composed of three subunits. PurQ produces an ammonia molecule by converting glutamine to glutamate. PurL transfers the ammonia molecule to FGAR to form FGAM in an ATP-dependent manner. PurS interacts with PurQ and PurL and is thought to assist in the transfer of the ammonia molecule from PurQ to PurL. In Pyrococcus furiosus (strain ATCC 43587 / DSM 3638 / JCM 8422 / Vc1), this protein is Phosphoribosylformylglycinamidine synthase subunit PurQ.